A 381-amino-acid chain; its full sequence is Probable tRNA sulfurtransferase (381 aa).

In terms of domain architecture, THUMP spans 55–163; sequence GECLENLNKV…DDEAFIYHEK (109 aa). ATP-binding positions include 181 to 182, Lys265, Gly287, and Gln296; that span reads LV.

It belongs to the ThiI family.

The protein resides in the cytoplasm. It carries out the reaction [ThiI sulfur-carrier protein]-S-sulfanyl-L-cysteine + a uridine in tRNA + 2 reduced [2Fe-2S]-[ferredoxin] + ATP + H(+) = [ThiI sulfur-carrier protein]-L-cysteine + a 4-thiouridine in tRNA + 2 oxidized [2Fe-2S]-[ferredoxin] + AMP + diphosphate. It catalyses the reaction [ThiS sulfur-carrier protein]-C-terminal Gly-Gly-AMP + S-sulfanyl-L-cysteinyl-[cysteine desulfurase] + AH2 = [ThiS sulfur-carrier protein]-C-terminal-Gly-aminoethanethioate + L-cysteinyl-[cysteine desulfurase] + A + AMP + 2 H(+). The protein operates within cofactor biosynthesis; thiamine diphosphate biosynthesis. Catalyzes the ATP-dependent transfer of a sulfur to tRNA to produce 4-thiouridine in position 8 of tRNAs, which functions as a near-UV photosensor. Also catalyzes the transfer of sulfur to the sulfur carrier protein ThiS, forming ThiS-thiocarboxylate. This is a step in the synthesis of thiazole, in the thiamine biosynthesis pathway. The sulfur is donated as persulfide by IscS. The polypeptide is Probable tRNA sulfurtransferase (Methanobrevibacter smithii (strain ATCC 35061 / DSM 861 / OCM 144 / PS)).